The following is a 102-amino-acid chain: Cytochrome b (102 aa).

Transmembrane regions (helical) follow at residues 1–21 (FGSL…FLAM), 45–66 (WLMR…FLHI), and 81–101 (WNIG…GYVL). His51 and His65 together coordinate heme b.

Belongs to the cytochrome b family. As to quaternary structure, the cytochrome bc1 complex contains 3 respiratory subunits (MT-CYB, CYC1 and UQCRFS1), 2 core proteins (UQCRC1 and UQCRC2) and probably 6 low-molecular weight proteins. It depends on heme b as a cofactor.

It localises to the mitochondrion inner membrane. Component of the ubiquinol-cytochrome c reductase complex (complex III or cytochrome b-c1 complex) that is part of the mitochondrial respiratory chain. The b-c1 complex mediates electron transfer from ubiquinol to cytochrome c. Contributes to the generation of a proton gradient across the mitochondrial membrane that is then used for ATP synthesis. The chain is Cytochrome b (mt-cyb) from Ambystoma tigrinum (Eastern tiger salamander).